We begin with the raw amino-acid sequence, 134 residues long: Small ribosomal subunit protein uS9 (134 aa).

A compositionally biased stretch (basic and acidic residues) spans 98–114 (SKQELKSHGFLTRDPRK). Positions 98–134 (SKQELKSHGFLTRDPRKKERKKYGHKKARKSFQFSKR) are disordered. The segment covering 115–134 (KERKKYGHKKARKSFQFSKR) has biased composition (basic residues).

The protein belongs to the universal ribosomal protein uS9 family.

In Chlamydia caviae (strain ATCC VR-813 / DSM 19441 / 03DC25 / GPIC) (Chlamydophila caviae), this protein is Small ribosomal subunit protein uS9.